The sequence spans 254 residues: Glutathione S-transferase F14 (254 aa).

One can recognise a GST N-terminal domain in the interval 4–85 (SKMKLHCGFI…YLAEQYKDVG (82 aa)). Residues 42-43 (AK), 56-57 (EV), and 69-70 (EP) contribute to the glutathione site. The GST C-terminal domain maps to 92–231 (DPKKRAIMSM…DLMKQRRLPI (140 aa)).

This sequence belongs to the GST superfamily. Phi family.

It is found in the cytoplasm. The protein localises to the cytosol. The catalysed reaction is RX + glutathione = an S-substituted glutathione + a halide anion + H(+). Its function is as follows. May be involved in the conjugation of reduced glutathione to a wide number of exogenous and endogenous hydrophobic electrophiles and have a detoxification role against certain herbicides. The sequence is that of Glutathione S-transferase F14 from Arabidopsis thaliana (Mouse-ear cress).